The following is a 199-amino-acid chain: Golgi to ER traffic protein 1 (199 aa).

Residues 1-11 (MLLPDLHPYTI) lie on the Lumenal side of the membrane. A helical transmembrane segment spans residues 12-31 (LLSIFIVLLLKQLVASIGKS). Over 32–115 (TIKEFVWLVY…SIDKVSNALL (84 aa)) the chain is Cytoplasmic. Positions 66–116 (EKRAISAQDEYAKWTKLNRQADKLSAELQKLNQEIQQQKASIDKVSNALLL) form a coiled coil. The chain crosses the membrane as a helical span at residues 116 to 136 (LVLTTLPIWVARVLYRNTHLF). Topologically, residues 137–160 (YIRQGIFPKYVEWVLALPFLPNGA) are lumenal. Residues 161-177 (VGLTIWMFAVNSVVSNF) form a helical membrane-spanning segment. Over 178–199 (AFLVSFPFAKKVSKPVRDTKIE) the chain is Cytoplasmic.

The protein belongs to the WRB/GET1 family. In terms of assembly, component of the Golgi to ER traffic (GET) complex, which is composed of GET1, GET2 and GET3. Within the complex, GET1 and GET2 form a heterotetramer which is stabilized by phosphatidylinositol binding and which binds to the GET3 homodimer.

It is found in the endoplasmic reticulum membrane. The protein localises to the golgi apparatus membrane. Required for the post-translational delivery of tail-anchored (TA) proteins to the endoplasmic reticulum. Together with GET2, acts as a membrane receptor for soluble GET3, which recognizes and selectively binds the transmembrane domain of TA proteins in the cytosol. The GET complex cooperates with the HDEL receptor ERD2 to mediate the ATP-dependent retrieval of resident ER proteins that contain a C-terminal H-D-E-L retention signal from the Golgi to the ER. This Candida dubliniensis (strain CD36 / ATCC MYA-646 / CBS 7987 / NCPF 3949 / NRRL Y-17841) (Yeast) protein is Golgi to ER traffic protein 1.